The sequence spans 75 residues: UPF0352 protein YPTB1297 (75 aa).

The protein belongs to the UPF0352 family.

The polypeptide is UPF0352 protein YPTB1297 (Yersinia pseudotuberculosis serotype I (strain IP32953)).